Consider the following 94-residue polypeptide: uncharacterized protein (94 aa).

A run of 2 helical transmembrane segments spans residues 7–24 (IFFIIVLVGFALFMSFNV) and 39–61 (AVPITLSLLFAFACGALTALLFL). A disordered region spans residues 68–94 (TRKQKREDSPTSAPTGGVSSPEHVDVP).

It localises to the cell membrane. This is an uncharacterized protein from Treponema pallidum (strain Nichols).